The following is a 238-amino-acid chain: Ethylene-responsive transcription factor ERN3 (238 aa).

The AP2/ERF DNA-binding region spans 24–81 (KFVGVRQRASGKWAAEIKDTSKNIRMWLGTYKTAEEAARAYDEAAFLLRGTNTRTNFS).

This sequence belongs to the AP2/ERF transcription factor family. ERF subfamily. In terms of tissue distribution, expressed in roots, root hairs and leaves.

Its subcellular location is the nucleus. Its function is as follows. Transcription factor involved in symbiotic nodule signaling in response to rhizobial Nod factors (NFs). Binds to the GCC box (NF-responsive box) of ENOD11 promoter. May act as transcriptional repressor of NF-responsive box-containing target gene promoters in root hairs. The sequence is that of Ethylene-responsive transcription factor ERN3 from Medicago truncatula (Barrel medic).